A 403-amino-acid polypeptide reads, in one-letter code: Phosphoglycerate kinase (403 aa).

Residues 24 to 26 (DLN), arginine 39, 62 to 65 (HLGR), arginine 121, and arginine 161 each bind substrate. ATP is bound by residues lysine 211, glycine 299, glutamate 330, and 359–362 (GGDS).

It belongs to the phosphoglycerate kinase family. In terms of assembly, monomer.

The protein localises to the cytoplasm. It carries out the reaction (2R)-3-phosphoglycerate + ATP = (2R)-3-phospho-glyceroyl phosphate + ADP. Its pathway is carbohydrate degradation; glycolysis; pyruvate from D-glyceraldehyde 3-phosphate: step 2/5. The polypeptide is Phosphoglycerate kinase (Rhodococcus opacus (strain B4)).